Here is a 364-residue protein sequence, read N- to C-terminus: Probable tartrate dehydrogenase/decarboxylase TtuC (364 aa).

Positions 222, 246, and 250 each coordinate Mn(2+).

This sequence belongs to the isocitrate and isopropylmalate dehydrogenases family. Requires Mg(2+) as cofactor. It depends on Mn(2+) as a cofactor. The cofactor is K(+).

The protein resides in the cytoplasm. The catalysed reaction is tartrate + NAD(+) = 2-hydroxy-3-oxosuccinate + NADH + H(+). It catalyses the reaction (2R,3S)-tartrate + NAD(+) = 2-hydroxy-3-oxosuccinate + NADH + H(+). It carries out the reaction (2R,3R)-tartrate + NAD(+) = 2-hydroxy-3-oxosuccinate + NADH + H(+). The enzyme catalyses (2R,3R)-tartrate + H(+) = (R)-glycerate + CO2. The catalysed reaction is (R)-malate + NAD(+) = pyruvate + CO2 + NADH. It participates in carbohydrate acid metabolism; tartrate degradation; 2-hydroxy-3-oxosuccinate from L-tartrate: step 1/1. The protein operates within carbohydrate acid metabolism; tartrate degradation; 2-hydroxy-3-oxosuccinate from meso-tartrate: step 1/1. It functions in the pathway carbohydrate acid metabolism; tartrate degradation; D-glycerate from L-tartrate: step 1/1. In terms of biological role, has multiple catalytic activities. Apart from catalyzing the oxidation of (+)-tartrate to oxaloglycolate, also converts meso-tartrate to D-glycerate and catalyzes the oxidative decarboxylation of D-malate to pyruvate. The polypeptide is Probable tartrate dehydrogenase/decarboxylase TtuC (ttuC) (Agrobacterium vitis (Rhizobium vitis)).